Consider the following 259-residue polypeptide: uncharacterized protein (259 aa).

This is an uncharacterized protein from Schizosaccharomyces pombe (strain 972 / ATCC 24843) (Fission yeast).